The primary structure comprises 177 residues: Inner membrane protein p22 (177 aa).

The Intravirion segment spans residues 1 to 7 (MFNIKMT). A helical membrane pass occupies residues 8-28 (ISTLLIALIILVIIILVVFLY). Residues 29-177 (YKKQQPPKKV…IALPRNHKHA (149 aa)) lie on the Virion surface side of the membrane.

The protein belongs to the asfivirus inner membrane protein p22 family.

The protein resides in the virion membrane. It is found in the host cell membrane. This chain is Inner membrane protein p22, found in Ornithodoros (relapsing fever ticks).